A 347-amino-acid polypeptide reads, in one-letter code: tRNA(Ile)-lysidine synthase (347 aa).

27 to 32 (SGGADS) is an ATP binding site. Residues 243–263 (AAPASPSHVEGEASAPHDAAH) form a disordered region.

Belongs to the tRNA(Ile)-lysidine synthase family.

It localises to the cytoplasm. The enzyme catalyses cytidine(34) in tRNA(Ile2) + L-lysine + ATP = lysidine(34) in tRNA(Ile2) + AMP + diphosphate + H(+). Its function is as follows. Ligates lysine onto the cytidine present at position 34 of the AUA codon-specific tRNA(Ile) that contains the anticodon CAU, in an ATP-dependent manner. Cytidine is converted to lysidine, thus changing the amino acid specificity of the tRNA from methionine to isoleucine. The polypeptide is tRNA(Ile)-lysidine synthase (Nitratidesulfovibrio vulgaris (strain ATCC 29579 / DSM 644 / CCUG 34227 / NCIMB 8303 / VKM B-1760 / Hildenborough) (Desulfovibrio vulgaris)).